A 151-amino-acid chain; its full sequence is Deoxyuridine 5'-triphosphate nucleotidohydrolase (151 aa).

Residues arginine 70–glycine 72, asparagine 83, leucine 87–aspartate 89, and methionine 97 contribute to the substrate site.

It belongs to the dUTPase family. As to quaternary structure, homotrimer. Mg(2+) serves as cofactor.

The enzyme catalyses dUTP + H2O = dUMP + diphosphate + H(+). It functions in the pathway pyrimidine metabolism; dUMP biosynthesis; dUMP from dCTP (dUTP route): step 2/2. In terms of biological role, this enzyme is involved in nucleotide metabolism: it produces dUMP, the immediate precursor of thymidine nucleotides and it decreases the intracellular concentration of dUTP so that uracil cannot be incorporated into DNA. The protein is Deoxyuridine 5'-triphosphate nucleotidohydrolase of Escherichia coli O45:K1 (strain S88 / ExPEC).